Reading from the N-terminus, the 354-residue chain is Alternative oxidase, mitochondrial (354 aa).

The N-terminal 64 residues, 1–64 (MNSMSTTGPI…RFISSTPQSQ (64 aa)), are a transit peptide targeting the mitochondrion. The helical transmembrane segment at 153 to 173 (FVFLESVAGVPGMVGGMLRHL) threads the bilayer. Glutamate 157, glutamate 196, and histidine 199 together coordinate Fe cation. Residues 215–235 (LMVLGAQGVFFNGFFLSYLIS) traverse the membrane as a helical segment. Fe cation-binding residues include glutamate 247, glutamate 302, and histidine 305. A disordered region spans residues 333 to 354 (KPHPGKGIKHLKTTGWEREEVV). The segment covering 335 to 344 (HPGKGIKHLK) has biased composition (basic residues).

The protein belongs to the alternative oxidase family. Fe cation is required as a cofactor.

The protein localises to the mitochondrion inner membrane. In terms of biological role, catalyzes cyanide-resistant oxygen consumption. May increase respiration when the cytochrome respiratory pathway is restricted, or in response to low temperatures. The polypeptide is Alternative oxidase, mitochondrial (alxA) (Emericella nidulans (strain FGSC A4 / ATCC 38163 / CBS 112.46 / NRRL 194 / M139) (Aspergillus nidulans)).